A 188-amino-acid chain; its full sequence is Threonylcarbamoyl-AMP synthase (188 aa).

Residues 3–188 (QLQPSAVATT…RSGQILRNGS (186 aa)) form the YrdC-like domain.

It belongs to the SUA5 family. TsaC subfamily.

It is found in the cytoplasm. The catalysed reaction is L-threonine + hydrogencarbonate + ATP = L-threonylcarbamoyladenylate + diphosphate + H2O. Functionally, required for the formation of a threonylcarbamoyl group on adenosine at position 37 (t(6)A37) in tRNAs that read codons beginning with adenine. Catalyzes the conversion of L-threonine, HCO(3)(-)/CO(2) and ATP to give threonylcarbamoyl-AMP (TC-AMP) as the acyladenylate intermediate, with the release of diphosphate. The protein is Threonylcarbamoyl-AMP synthase of Shewanella frigidimarina (strain NCIMB 400).